We begin with the raw amino-acid sequence, 235 residues long: NADH-quinone oxidoreductase subunit B 2 (235 aa).

A compositionally biased stretch (low complexity) spans 1–14 (MGLTSRPTPASRQP). The disordered stretch occupies residues 1-24 (MGLTSRPTPASRQPASPPPADPVL). Cysteine 63, cysteine 64, cysteine 129, and cysteine 159 together coordinate [4Fe-4S] cluster. The segment at 188–235 (TGATGGGPSTDALRSGLVAAPTAPGPTAPASTAPGPTAPAPTQDEERR) is disordered.

This sequence belongs to the complex I 20 kDa subunit family. In terms of assembly, NDH-1 is composed of 14 different subunits. Subunits NuoB, C, D, E, F, and G constitute the peripheral sector of the complex. [4Fe-4S] cluster is required as a cofactor.

It is found in the cell membrane. It catalyses the reaction a quinone + NADH + 5 H(+)(in) = a quinol + NAD(+) + 4 H(+)(out). In terms of biological role, NDH-1 shuttles electrons from NADH, via FMN and iron-sulfur (Fe-S) centers, to quinones in the respiratory chain. The immediate electron acceptor for the enzyme in this species is believed to be a menaquinone. Couples the redox reaction to proton translocation (for every two electrons transferred, four hydrogen ions are translocated across the cytoplasmic membrane), and thus conserves the redox energy in a proton gradient. The polypeptide is NADH-quinone oxidoreductase subunit B 2 (Streptomyces griseus subsp. griseus (strain JCM 4626 / CBS 651.72 / NBRC 13350 / KCC S-0626 / ISP 5235)).